A 232-amino-acid chain; its full sequence is Large ribosomal subunit protein uL3 (232 aa).

Belongs to the universal ribosomal protein uL3 family. In terms of assembly, part of the 50S ribosomal subunit. Forms a cluster with proteins L14 and L19.

One of the primary rRNA binding proteins, it binds directly near the 3'-end of the 23S rRNA, where it nucleates assembly of the 50S subunit. The polypeptide is Large ribosomal subunit protein uL3 (Sorangium cellulosum (strain So ce56) (Polyangium cellulosum (strain So ce56))).